The sequence spans 243 residues: MGRRIQGQRRGRGTSTFRAPSHRYKAELSHKQSESDDTITGTIVDIEHDPARSAPVAAVEFDDGDRRLVLAPEGIRVGETMQIGVSAEIKPGNTLPLREIPEGVPVCNVESQVGDGGKFARASGTSAQLMTHDRDVVVIELPSGETKRLSPACQATIGVVAGGGRTEKPFVKAGKKHHKMKARGIKWPRVRGVAMNAVDHPFGGGGRQHPGQPKSVSRDAPPGRKVGDIASKRTGRGGNGSSE.

Basic residues predominate over residues 1 to 12; the sequence is MGRRIQGQRRGR. Disordered regions lie at residues 1–38 and 198–243; these read MGRRIQGQRRGRGTSTFRAPSHRYKAELSHKQSESDDT and VDHP…GSSE. 2 stretches are compositionally biased toward basic and acidic residues: residues 24–34 and 221–231; these read YKAELSHKQSE and PPGRKVGDIAS.

Belongs to the universal ribosomal protein uL2 family. Part of the 50S ribosomal subunit. Forms a bridge to the 30S subunit in the 70S ribosome.

Functionally, one of the primary rRNA binding proteins. Required for association of the 30S and 50S subunits to form the 70S ribosome, for tRNA binding and peptide bond formation. It has been suggested to have peptidyltransferase activity; this is somewhat controversial. Makes several contacts with the 16S rRNA in the 70S ribosome. This is Large ribosomal subunit protein uL2 from Haloquadratum walsbyi (strain DSM 16790 / HBSQ001).